A 311-amino-acid polypeptide reads, in one-letter code: Malate dehydrogenase (311 aa).

NAD(+) is bound by residues 7 to 12 (GAGNVG) and Asp32. Substrate contacts are provided by Arg82 and Arg88. Residues Asn95 and 118–120 (VSN) contribute to the NAD(+) site. Residues Asn120 and Arg151 each contribute to the substrate site. His175 functions as the Proton acceptor in the catalytic mechanism.

This sequence belongs to the LDH/MDH superfamily. MDH type 3 family. Homotetramer.

The enzyme catalyses (S)-malate + NAD(+) = oxaloacetate + NADH + H(+). With respect to regulation, strongly inhibited by iodoacetic acid and CuCl(2). Completely inhibited by N-ethylmaleimide and HgCl(2). Catalyzes the reversible oxidation of malate to oxaloacetate. Can use both NAD and NADP for malate oxidation, but NADPH cannot be used for oxaloacetate reduction. This is Malate dehydrogenase from Flavobacterium frigidimaris.